We begin with the raw amino-acid sequence, 120 residues long: Large ribosomal subunit protein bL12 (120 aa).

This sequence belongs to the bacterial ribosomal protein bL12 family. Homodimer. Part of the ribosomal stalk of the 50S ribosomal subunit. Forms a multimeric L10(L12)X complex, where L10 forms an elongated spine to which 2 to 4 L12 dimers bind in a sequential fashion. Binds GTP-bound translation factors.

Its function is as follows. Forms part of the ribosomal stalk which helps the ribosome interact with GTP-bound translation factors. Is thus essential for accurate translation. The sequence is that of Large ribosomal subunit protein bL12 from Listeria welshimeri serovar 6b (strain ATCC 35897 / DSM 20650 / CCUG 15529 / CIP 8149 / NCTC 11857 / SLCC 5334 / V8).